Consider the following 190-residue polypeptide: Peptidyl-tRNA hydrolase (190 aa).

TRNA is bound at residue Tyr18. His23 (proton acceptor) is an active-site residue. Residues Phe69, Asn71, and Asn117 each coordinate tRNA.

The protein belongs to the PTH family. As to quaternary structure, monomer.

The protein resides in the cytoplasm. The enzyme catalyses an N-acyl-L-alpha-aminoacyl-tRNA + H2O = an N-acyl-L-amino acid + a tRNA + H(+). Hydrolyzes ribosome-free peptidyl-tRNAs (with 1 or more amino acids incorporated), which drop off the ribosome during protein synthesis, or as a result of ribosome stalling. Its function is as follows. Catalyzes the release of premature peptidyl moieties from peptidyl-tRNA molecules trapped in stalled 50S ribosomal subunits, and thus maintains levels of free tRNAs and 50S ribosomes. This Rhodococcus jostii (strain RHA1) protein is Peptidyl-tRNA hydrolase.